A 796-amino-acid polypeptide reads, in one-letter code: Lon protease (796 aa).

Residues 19–213 enclose the Lon N-terminal domain; that stretch reads LPVVVTRGIF…LLKELIINRP (195 aa). 376-383 is a binding site for ATP; it reads GPPGVGKT. Positions 612 to 793 constitute a Lon proteolytic domain; the sequence is ESQVGVVTGL…EDVYEIIFKN (182 aa). Residues Ser699 and Lys742 contribute to the active site.

Belongs to the peptidase S16 family. As to quaternary structure, homohexamer. Organized in a ring with a central cavity.

The protein resides in the cytoplasm. It catalyses the reaction Hydrolysis of proteins in presence of ATP.. Functionally, ATP-dependent serine protease that mediates the selective degradation of mutant and abnormal proteins as well as certain short-lived regulatory proteins. Required for cellular homeostasis and for survival from DNA damage and developmental changes induced by stress. Degrades polypeptides processively to yield small peptide fragments that are 5 to 10 amino acids long. Binds to DNA in a double-stranded, site-specific manner. The chain is Lon protease from Mycoplasma mycoides subsp. mycoides SC (strain CCUG 32753 / NCTC 10114 / PG1).